Consider the following 187-residue polypeptide: Transcriptional repressor NrdR (187 aa).

A zinc finger lies at 3–34 (CPFCRHPDSRVVDSRTTDDGTSIRRRRQCPDC). Residues 46–136 (LMVVKRSGVT…VYRAFDSLED (91 aa)) form the ATP-cone domain. The segment at 146–187 (EEQRERPAVDDEDHEDAGAERQGTDRGSGGTVEVPVPATVAD) is disordered.

Belongs to the NrdR family. The cofactor is Zn(2+).

Negatively regulates transcription of bacterial ribonucleotide reductase nrd genes and operons by binding to NrdR-boxes. The chain is Transcriptional repressor NrdR from Streptomyces avermitilis (strain ATCC 31267 / DSM 46492 / JCM 5070 / NBRC 14893 / NCIMB 12804 / NRRL 8165 / MA-4680).